We begin with the raw amino-acid sequence, 238 residues long: Probable transcriptional regulatory protein SpyM51586 (238 aa).

This sequence belongs to the TACO1 family. YeeN subfamily.

The protein resides in the cytoplasm. This Streptococcus pyogenes serotype M5 (strain Manfredo) protein is Probable transcriptional regulatory protein SpyM51586.